The primary structure comprises 208 residues: Large ribosomal subunit protein bL25 (208 aa).

Positions 178–208 (LPPQQSEVPEPDSEEEPKEPEAIKEKDNDGE) are disordered. A compositionally biased stretch (acidic residues) spans 186–195 (PEPDSEEEPK). A compositionally biased stretch (basic and acidic residues) spans 196-208 (EPEAIKEKDNDGE).

This sequence belongs to the bacterial ribosomal protein bL25 family. CTC subfamily. Part of the 50S ribosomal subunit; part of the 5S rRNA/L5/L18/L25 subcomplex. Contacts the 5S rRNA. Binds to the 5S rRNA independently of L5 and L18.

In terms of biological role, this is one of the proteins that binds to the 5S RNA in the ribosome where it forms part of the central protuberance. This Bacillus pumilus (strain SAFR-032) protein is Large ribosomal subunit protein bL25.